The chain runs to 606 residues: Elongation factor 4 (606 aa).

The tr-type G domain occupies 10–192 (KNIRNFSIIA…ALVARVPPPQ (183 aa)). GTP is bound by residues 22–27 (DHGKST) and 139–142 (NKID).

Belongs to the TRAFAC class translation factor GTPase superfamily. Classic translation factor GTPase family. LepA subfamily.

It is found in the cell inner membrane. It carries out the reaction GTP + H2O = GDP + phosphate + H(+). In terms of biological role, required for accurate and efficient protein synthesis under certain stress conditions. May act as a fidelity factor of the translation reaction, by catalyzing a one-codon backward translocation of tRNAs on improperly translocated ribosomes. Back-translocation proceeds from a post-translocation (POST) complex to a pre-translocation (PRE) complex, thus giving elongation factor G a second chance to translocate the tRNAs correctly. Binds to ribosomes in a GTP-dependent manner. In Nitrosococcus oceani (strain ATCC 19707 / BCRC 17464 / JCM 30415 / NCIMB 11848 / C-107), this protein is Elongation factor 4.